The primary structure comprises 938 residues: Isoleucine--tRNA ligase (938 aa).

Positions 58–68 (PYANGNIHIGH) match the 'HIGH' region motif. E561 is an L-isoleucyl-5'-AMP binding site. The 'KMSKS' region motif lies at 602 to 606 (KMSKS). Position 605 (K605) interacts with ATP. Residues C901, C904, C921, and C924 each coordinate Zn(2+).

This sequence belongs to the class-I aminoacyl-tRNA synthetase family. IleS type 1 subfamily. In terms of assembly, monomer. Zn(2+) is required as a cofactor.

It is found in the cytoplasm. It carries out the reaction tRNA(Ile) + L-isoleucine + ATP = L-isoleucyl-tRNA(Ile) + AMP + diphosphate. In terms of biological role, catalyzes the attachment of isoleucine to tRNA(Ile). As IleRS can inadvertently accommodate and process structurally similar amino acids such as valine, to avoid such errors it has two additional distinct tRNA(Ile)-dependent editing activities. One activity is designated as 'pretransfer' editing and involves the hydrolysis of activated Val-AMP. The other activity is designated 'posttransfer' editing and involves deacylation of mischarged Val-tRNA(Ile). The chain is Isoleucine--tRNA ligase from Yersinia pseudotuberculosis serotype O:1b (strain IP 31758).